The following is a 279-amino-acid chain: Urease accessory protein UreD (279 aa).

It belongs to the UreD family. In terms of assembly, ureD, UreF and UreG form a complex that acts as a GTP-hydrolysis-dependent molecular chaperone, activating the urease apoprotein by helping to assemble the nickel containing metallocenter of UreC. The UreE protein probably delivers the nickel.

The protein resides in the cytoplasm. Its function is as follows. Required for maturation of urease via the functional incorporation of the urease nickel metallocenter. The protein is Urease accessory protein UreD of Nitrosospira multiformis (strain ATCC 25196 / NCIMB 11849 / C 71).